A 449-amino-acid chain; its full sequence is AP-4 complex subunit mu-1 (449 aa).

The MHD domain maps to 184-448 (KNEVFLDVVE…LSHSNAYVIR (265 aa)).

Belongs to the adaptor complexes medium subunit family. In terms of assembly, adaptor protein complex 4 (AP-4) is a heterotetramer composed of two large adaptins (epsilon-type subunit AP4E1 and beta-type subunit AP4B1), a medium adaptin (mu-type subunit AP4M1) and a small adaptin (sigma-type AP4S1). Interacts with tyrosine-based sorting signals on the cytoplasmic tail of cargo proteins such as APP, ATG9A, LAMP2 and NAGPA. Interacts with the C-terminal domain of GRID2. Interacts with GRIA1 and GRIA2; the interaction is indirect via CACNG3. Interacts with CACNG3; CACNG3 associates GRIA1 and GRIA2 with the adaptor protein complex 4 (AP-4) to target them to the somatodendritic compartment of neurons. Interacts with HOOK1 and HOOK2; the interactions are direct, mediate the interaction between FTS-Hook-FHIP (FHF) complex and AP-4 and the perinuclear distribution of AP-4.

It is found in the golgi apparatus. The protein localises to the trans-Golgi network membrane. It localises to the early endosome. In terms of biological role, component of the adaptor protein complex 4 (AP-4). Adaptor protein complexes are vesicle coat components involved both in vesicle formation and cargo selection. They control the vesicular transport of proteins in different trafficking pathways. AP-4 forms a non clathrin-associated coat on vesicles departing the trans-Golgi network (TGN) and may be involved in the targeting of proteins from the trans-Golgi network (TGN) to the endosomal-lysosomal system. It is also involved in protein sorting to the basolateral membrane in epithelial cells and the proper asymmetric localization of somatodendritic proteins in neurons. Within AP-4, the mu-type subunit AP4M1 is directly involved in the recognition and binding of tyrosine-based sorting signals found in the cytoplasmic part of cargos. The adaptor protein complex 4 (AP-4) may also recognize other types of sorting signal. The protein is AP-4 complex subunit mu-1 of Mus musculus (Mouse).